The chain runs to 555 residues: Transmembrane protein 87A (555 aa).

The signal sequence occupies residues 1–21 (MAAAAWLQVLPVILLLLGAHP). The Lumenal segment spans residues 22 to 225 (SPLSFFSAGP…YEYLTLEDYP (204 aa)). 2 disulfide bridges follow: Cys74–Cys128 and Cys89–Cys431. Residues Asn79, Asn127, Asn157, and Asn160 are each glycosylated (N-linked (GlcNAc...) asparagine). A helical transmembrane segment spans residues 226-246 (LMIFFMVMCIVYVLFGVLWLA). The Cytoplasmic portion of the chain corresponds to 247 to 257 (WSACYWRDLLR). The helical transmembrane segment at 258–278 (IQFWIGAVIFLGMLEKAVFYA) threads the bilayer. At 279-305 (EFQNIRYKGESVQGALILAELLSAVKR) the chain is on the lumenal side. The helical transmembrane segment at 306–322 (SLARTLVIIVSLGYGIV) threads the bilayer. Over 323 to 325 (KPR) the chain is Cytoplasmic. The helical transmembrane segment at 326 to 346 (LGVTLHKVVVAGALYLLFSGM) threads the bilayer. The Lumenal portion of the chain corresponds to 347 to 361 (EGVLRVTGAQTDLAS). A helical transmembrane segment spans residues 362–382 (LAFIPLAFLDTALCWWIFISL). The Cytoplasmic segment spans residues 383–403 (TQTMKLLKLRRNIVKLSLYRH). The helical transmembrane segment at 404–424 (FTNTLILAVAASIVFIIWTTM) threads the bilayer. Topologically, residues 425–437 (KFRIVTCQSDWRE) are lumenal. A helical transmembrane segment spans residues 438-458 (LWVDDAIWRLLFSMILFVIMV). Residues 459–555 (LWRPSANNQR…ITHFERSKME (97 aa)) are Cytoplasmic-facing. The segment at 473-516 (PLSEEEEEDEQKEPMLKESFEGMKMRSTKQEPNGNSKVNKAQED) is disordered. Over residues 484-496 (KEPMLKESFEGMK) the composition is skewed to basic and acidic residues. Positions 502–511 (QEPNGNSKVN) are enriched in polar residues. The residue at position 540 (Ser540) is a Phosphoserine.

This sequence belongs to the LU7TM family. TMEM87 subfamily. In terms of assembly, may interact with STOML3; STOML3 potentiates the mechanosensitive ion channel activity associated with TMEM87A.

The protein resides in the cell membrane. It localises to the golgi apparatus membrane. It is found in the cell projection. Its subcellular location is the ruffle. Functionally, potential monoatomic ion channel gated by mechanical force, implicated in normal touch sensitivity through the generation of mechanically activated currents. However, a direct channel activity is debated and an alternative could be that it functions as a chaperone for an unidentified mechanosensitive ion channel. Could also be involved in cell mechanosensitivity regulating cell adhesion and migration. May also be involved in retrograde transport from endosomes to the trans-Golgi network (TGN). The sequence is that of Transmembrane protein 87A from Homo sapiens (Human).